Consider the following 403-residue polypeptide: S-adenosylmethionine sensor upstream of mTORC1 (403 aa).

Over residues 1–10 (MEPGPGGRGA) the composition is skewed to gly residues. The tract at residues 1–32 (MEPGPGGRGAARGQRPPNAAQPREQERKLEQE) is disordered. The segment covering 11-22 (ARGQRPPNAAQP) has biased composition (low complexity). A compositionally biased stretch (basic and acidic residues) spans 23–32 (REQERKLEQE). 6 residues coordinate S-adenosyl-L-methionine: R93, G170, D188, D200, F201, and S242.

It belongs to the BMT2/SAMTOR family. In terms of assembly, interacts with the GATOR1 complex; interaction is disrupted when SAMTOR binds S-adenosyl-L-methionine. Interacts with the KICSTOR complex; interaction is disrupted when SAMTOR binds S-adenosyl-L-methionine.

S-adenosyl-L-methionine-binding protein that acts as an inhibitor of mTORC1 signaling via interaction with the GATOR1 and KICSTOR complexes. Acts as a sensor of S-adenosyl-L-methionine to signal methionine sufficiency to mTORC1: in presence of methionine, binds S-adenosyl-L-methionine, leading to disrupt interaction with the GATOR1 and KICSTOR complexes and promote mTORC1 signaling. Upon methionine starvation, S-adenosyl-L-methionine levels are reduced, thereby promoting the association with GATOR1 and KICSTOR, leading to inhibit mTORC1 signaling. Probably also acts as a S-adenosyl-L-methionine-dependent methyltransferase. The chain is S-adenosylmethionine sensor upstream of mTORC1 from Mus musculus (Mouse).